The primary structure comprises 438 residues: L-cysteine:1D-myo-inositol 2-amino-2-deoxy-alpha-D-glucopyranoside ligase (438 aa).

Positions 1–27 (MKSWSSRPVPELPGTGTAPRVHDTSTG) are disordered. Cys44 is a binding site for Zn(2+). L-cysteinyl-5'-AMP contacts are provided by residues 44 to 47 (CGIT), Thr59, and 82 to 84 (NVT). The short motif at 46-56 (ITPYDATHMGH) is the 'HIGH' region element. A 'ERGGDP' region motif is present at residues 208–213 (DHGGDP). Residue Trp249 participates in L-cysteinyl-5'-AMP binding. Zn(2+) is bound at residue Cys253. 271–273 (GSD) lines the L-cysteinyl-5'-AMP pocket. Position 278 (His278) interacts with Zn(2+). Val304 contributes to the L-cysteinyl-5'-AMP binding site. Residues 310 to 314 (KMSKS) carry the 'KMSKS' region motif.

Belongs to the class-I aminoacyl-tRNA synthetase family. MshC subfamily. As to quaternary structure, monomer. Zn(2+) serves as cofactor.

The enzyme catalyses 1D-myo-inositol 2-amino-2-deoxy-alpha-D-glucopyranoside + L-cysteine + ATP = 1D-myo-inositol 2-(L-cysteinylamino)-2-deoxy-alpha-D-glucopyranoside + AMP + diphosphate + H(+). In terms of biological role, catalyzes the ATP-dependent condensation of GlcN-Ins and L-cysteine to form L-Cys-GlcN-Ins. The protein is L-cysteine:1D-myo-inositol 2-amino-2-deoxy-alpha-D-glucopyranoside ligase of Kocuria rhizophila (strain ATCC 9341 / DSM 348 / NBRC 103217 / DC2201).